Consider the following 340-residue polypeptide: NADH-quinone oxidoreductase subunit H (340 aa).

9 helical membrane-spanning segments follow: residues 3–23 (LVGM…LVYM), 69–89 (WAFF…WAVI), 102–122 (VVVM…VLAI), 127–147 (VYGI…LGAI), 154–174 (ISYE…AGSL), 186–206 (MPYW…VSML), 248–268 (ILVS…PLNI), 274–294 (IPGF…FIWV), and 312–332 (KVFL…LLWV).

Belongs to the complex I subunit 1 family. NDH-1 is composed of 14 different subunits. Subunits NuoA, H, J, K, L, M, N constitute the membrane sector of the complex.

Its subcellular location is the cell inner membrane. The enzyme catalyses a quinone + NADH + 5 H(+)(in) = a quinol + NAD(+) + 4 H(+)(out). NDH-1 shuttles electrons from NADH, via FMN and iron-sulfur (Fe-S) centers, to quinones in the respiratory chain. The immediate electron acceptor for the enzyme in this species is believed to be ubiquinone. Couples the redox reaction to proton translocation (for every two electrons transferred, four hydrogen ions are translocated across the cytoplasmic membrane), and thus conserves the redox energy in a proton gradient. This subunit may bind ubiquinone. This Anaplasma phagocytophilum (strain HZ) protein is NADH-quinone oxidoreductase subunit H.